A 765-amino-acid polypeptide reads, in one-letter code: Protein transport protein Sec23A (765 aa).

Cysteine 61, cysteine 66, cysteine 85, and cysteine 88 together coordinate Zn(2+). A Gelsolin-like repeat occupies 632–718; sequence PEPVLLDSSS…EHGGSQARFL (87 aa).

This sequence belongs to the SEC23/SEC24 family. SEC23 subfamily. COPII is composed of at least five proteins: the Sec23/24 complex, the Sec13/31 complex and Sar1.

Its subcellular location is the cytoplasmic vesicle. The protein localises to the COPII-coated vesicle membrane. It localises to the endoplasmic reticulum membrane. It is found in the cytoplasm. The protein resides in the cytosol. Its function is as follows. Component of the coat protein complex II (COPII) which promotes the formation of transport vesicles from the endoplasmic reticulum (ER). The coat has two main functions, the physical deformation of the endoplasmic reticulum membrane into vesicles and the selection of cargo molecules for their transport to the Golgi complex. The sequence is that of Protein transport protein Sec23A from Danio rerio (Zebrafish).